The primary structure comprises 128 residues: Large ribosomal subunit protein bL12 (128 aa).

It belongs to the bacterial ribosomal protein bL12 family. Homodimer. Part of the ribosomal stalk of the 50S ribosomal subunit. Forms a multimeric L10(L12)X complex, where L10 forms an elongated spine to which 2 to 4 L12 dimers bind in a sequential fashion. Binds GTP-bound translation factors.

Forms part of the ribosomal stalk which helps the ribosome interact with GTP-bound translation factors. Is thus essential for accurate translation. In Picosynechococcus sp. (strain ATCC 27264 / PCC 7002 / PR-6) (Agmenellum quadruplicatum), this protein is Large ribosomal subunit protein bL12.